We begin with the raw amino-acid sequence, 338 residues long: Glyceraldehyde-3-phosphate dehydrogenase (338 aa).

Residues 12 to 13 (RI), Asp34, and Arg79 each bind NAD(+). D-glyceraldehyde 3-phosphate is bound by residues 150–152 (SCT), Thr181, 210–211 (TG), and Arg233. The active-site Nucleophile is the Cys151. Asn315 serves as a coordination point for NAD(+).

Belongs to the glyceraldehyde-3-phosphate dehydrogenase family. Homotetramer.

Its subcellular location is the cytoplasm. It carries out the reaction D-glyceraldehyde 3-phosphate + phosphate + NAD(+) = (2R)-3-phospho-glyceroyl phosphate + NADH + H(+). It participates in carbohydrate degradation; glycolysis; pyruvate from D-glyceraldehyde 3-phosphate: step 1/5. The polypeptide is Glyceraldehyde-3-phosphate dehydrogenase (gpd-1) (Neurospora crassa (strain ATCC 24698 / 74-OR23-1A / CBS 708.71 / DSM 1257 / FGSC 987)).